The sequence spans 383 residues: Xylose/arabinose import ATP-binding protein XacK (383 aa).

An ABC transporter domain is found at 4–240 (LTLDDVTKVY…PNNLFVAGFI (237 aa)). 41-48 (GPSGCGKS) contacts ATP.

The protein belongs to the ABC transporter superfamily. Carbohydrate uptake transporter-1 (CUT1) (TC 3.A.1.1) family. The complex is composed of two ATP-binding proteins (XacJ and XacK), two transmembrane proteins (XacH and XacI) and a solute-binding protein (XacG).

The protein localises to the cell membrane. The catalysed reaction is D-xylose(out) + ATP + H2O = D-xylose(in) + ADP + phosphate + H(+). It carries out the reaction L-arabinose(out) + ATP + H2O = L-arabinose(in) + ADP + phosphate + H(+). Its function is as follows. Part of the ABC transporter complex XacGHIJK involved in the uptake of xylose and arabinose. Responsible for energy coupling to the transport system. This chain is Xylose/arabinose import ATP-binding protein XacK, found in Haloferax volcanii (strain ATCC 29605 / DSM 3757 / JCM 8879 / NBRC 14742 / NCIMB 2012 / VKM B-1768 / DS2) (Halobacterium volcanii).